The sequence spans 732 residues: Prolyl tripeptidyl peptidase (732 aa).

Positions 1–24 (MKKTIFQQLFLSVCALTVALPCSA) are cleaved as a signal peptide. Active-site charge relay system residues include Ser-603, Asp-678, and His-710.

The protein belongs to the peptidase S9B family. Post-translationally, the N-terminus is blocked.

It catalyses the reaction Hydrolysis of Xaa-Xaa-Pro-|-Yaa- releasing the N-terminal tripeptide of a peptide with Pro as the third residue (position P1) and where Yaa is not proline.. Its activity is regulated as follows. Strongly inhibited by diisopropyl fluorophosphate and Pefabloc. Weakly inhibited by 3,4-dichloroisocumarin. Not inhibited by phenylmethylsulfonyl fluoride, leupeptin, antipain or prolinal. Activated by iodoacetamide. In terms of biological role, serine proteinase. Releases tripeptides from the free amino terminus of proteins. Has a requirement for Pro in the P1 position, but is inactivated by Pro in the P1' position. The polypeptide is Prolyl tripeptidyl peptidase (Porphyromonas gingivalis (strain ATCC BAA-308 / W83)).